A 26-amino-acid chain; its full sequence is Acetyl-CoA acetyltransferase (26 aa).

The active-site Acyl-thioester intermediate is Cys21.

It belongs to the thiolase-like superfamily. Thiolase family. Homotetramer. Post-translationally, succinylation, adjacent to a coenzyme A binding site. Desuccinylated by SIRT5.

The protein localises to the mitochondrion. The catalysed reaction is 2 acetyl-CoA = acetoacetyl-CoA + CoA. This chain is Acetyl-CoA acetyltransferase, found in Sus scrofa (Pig).